An 81-amino-acid chain; its full sequence is Acyl carrier protein (81 aa).

The Carrier domain maps to 2 to 80; the sequence is ASEQEILSGL…DAVAYISQAQ (79 aa). Serine 40 carries the O-(pantetheine 4'-phosphoryl)serine modification.

Belongs to the acyl carrier protein (ACP) family. In terms of processing, 4'-phosphopantetheine is transferred from CoA to a specific serine of apo-ACP by AcpS. This modification is essential for activity because fatty acids are bound in thioester linkage to the sulfhydryl of the prosthetic group.

It is found in the cytoplasm. It functions in the pathway lipid metabolism; fatty acid biosynthesis. In terms of biological role, carrier of the growing fatty acid chain in fatty acid biosynthesis. This is Acyl carrier protein from Kineococcus radiotolerans (strain ATCC BAA-149 / DSM 14245 / SRS30216).